The primary structure comprises 329 residues: UDP-N-acetylenolpyruvoylglucosamine reductase (329 aa).

An FAD-binding PCMH-type domain is found at 28-192; the sequence is RVGGPADLLC…ARVEVRLRPG (165 aa). R172 is an active-site residue. The interval 204–225 is disordered; sequence DRERRRATQPLDRPTFGSTFTN. S221 serves as the catalytic Proton donor. Residue E291 is part of the active site. The disordered stretch occupies residues 303–329; the sequence is LAGLDGHAADGGGPGAASGGARPREAT. Residues 311 to 320 are compositionally biased toward gly residues; it reads ADGGGPGAAS.

It belongs to the MurB family. The cofactor is FAD.

It localises to the cytoplasm. The catalysed reaction is UDP-N-acetyl-alpha-D-muramate + NADP(+) = UDP-N-acetyl-3-O-(1-carboxyvinyl)-alpha-D-glucosamine + NADPH + H(+). It functions in the pathway cell wall biogenesis; peptidoglycan biosynthesis. Functionally, cell wall formation. In Anaeromyxobacter dehalogenans (strain 2CP-C), this protein is UDP-N-acetylenolpyruvoylglucosamine reductase.